The sequence spans 381 residues: MMRSHADDSAEARPAPAMSVGVFIPIGNNGWLLSENAPQYRPSFALNKAITLKAEGYGLDFALSMIKLRGFGGKTEFWDHNLESFTLMAGLAAVTTRIRLFATAATLCLPPAIVARMAATIDSISDGRFGLNLVTGWQKPEYDQMGLWPGDAHFANRYDYLAEYAQILRDLWETGASDRKGAYFQMNDCRLSPRPQAPVKIICAGQSGAGLAFTAQYADYNFCLGKGLNTPTAFAPVVEKLAEASARTGRRVTAFALFMIIADETDDAAMATWAHYRAGADAEAIAWLGAQGAADTRSGSDTNVRQLADPASAVNLNMGTLVGSYASVAAMLDAVMTIDGVEGVLLVFDDFLKGLDAFGTRIQPLMRSRRHVTAAALPEVA.

Residues 66 to 67, N132, E141, 157 to 158, and S207 each bind FMN; these read IK and RY.

The protein belongs to the NtaA/SnaA/DszA monooxygenase family. RutA subfamily.

The enzyme catalyses uracil + FMNH2 + NADH + O2 = (Z)-3-ureidoacrylate + FMN + NAD(+) + H2O + H(+). It carries out the reaction thymine + FMNH2 + NADH + O2 = (Z)-2-methylureidoacrylate + FMN + NAD(+) + H2O + H(+). Catalyzes the pyrimidine ring opening between N-3 and C-4 by an unusual flavin hydroperoxide-catalyzed mechanism, adding oxygen atoms in the process to yield ureidoacrylate peracid, that immediately reacts with FMN forming ureidoacrylate and FMN-N(5)-oxide. The FMN-N(5)-oxide reacts spontaneously with NADH to produce FMN. Requires the flavin reductase RutF to regenerate FMN in vivo. The protein is Pyrimidine monooxygenase RutA of Methylobacterium radiotolerans (strain ATCC 27329 / DSM 1819 / JCM 2831 / NBRC 15690 / NCIMB 10815 / 0-1).